A 137-amino-acid polypeptide reads, in one-letter code: Photosystem II reaction center W protein, chloroplastic (137 aa).

The transit peptide at 1 to 64 (MATITASSSA…ETTTTTNKSM (64 aa)) directs the protein to the chloroplast. A thylakoid-targeting transit peptide spans 65–83 (GASLLAAAAAATISNPAMA). The Lumenal, thylakoid segment spans residues 84–103 (LVDERMSTEGTGLPFGLSNN). A helical membrane pass occupies residues 104–123 (LLGWILFGVFGLIWALYFVY). At 124–137 (ASGLEEDEESGLSL) the chain is on the stromal side.

In terms of assembly, part of the photosystem II complex. PSII is composed of 1 copy each of membrane proteins PsbA, PsbB, PsbC, PsbD, numerous small proteins, at least 3 peripheral proteins of the oxygen-evolving complex and a large number of cofactors. It forms dimeric complexes.

It localises to the plastid. The protein resides in the chloroplast thylakoid membrane. Functionally, stabilizes dimeric photosystem II (PSII). In its absence no dimeric PSII accumulates and there is a reduction of monomeric PSII. This is Photosystem II reaction center W protein, chloroplastic from Spinacia oleracea (Spinach).